The primary structure comprises 131 residues: Large ribosomal subunit protein bL17 (131 aa).

Belongs to the bacterial ribosomal protein bL17 family. In terms of assembly, part of the 50S ribosomal subunit. Contacts protein L32.

The protein is Large ribosomal subunit protein bL17 of Oenococcus oeni (strain ATCC BAA-331 / PSU-1).